Consider the following 79-residue polypeptide: RNA-binding protein KhpA (79 aa).

Positions 30–79 (GRVLEVRVHPDDLGKVIGRNGRTARALRTVVGAIGGRGVRVDLVDVDHVR) constitute a KH domain.

This sequence belongs to the KhpA RNA-binding protein family.

It localises to the cytoplasm. The protein resides in the nucleoid. In terms of biological role, a probable RNA-binding protein. The chain is RNA-binding protein KhpA from Streptomyces coelicolor (strain ATCC BAA-471 / A3(2) / M145).